The primary structure comprises 735 residues: MATKLFPKFSQGLAQDPTTRRIWYGLAMAHDFESHDGMTEENLYQKIFASHFGQLSIIFLWTSGNLFHVAWQGNFEQWVTDPVHIRPIAHAIWDPHFGQPAVEAFTRGGASGPVNISTSGVYQWWYTIGMRTNQDLYVGSVFLALVSAIFLFAGWLHLQPNFQPSLSWFKDAESRLNHHLSGLFGVSSLAWTGHLVHVAIPESRGQHVGWDNFLSVLPHPQGLTPFFTGNWAAYAQSPDTASHVFGTAQGSGQAILTFLGGFHPQTQSLWLTDMAHHHLAIAVIFIVAGHMYRTNFGIGHRMQAILEAHTPPSGSLGAGHKGLFDTVNNSLHFQLGLALASVGTITSLVAQHMYSLPPYAFQAIDFTTQAALYTHHQYIAGFIMCGAFAHGAIFFIRDYDPEQNKGNVLARMLDHKEALISHLSWVSLFLGFHTLGLYVHNDVMQAFGTPEKQILIEPVFAQWIQAAHGKALYGFDFLLSSKTSAAFANGQSLWLPGWLDAINNNQNSLFLTIGPGDFLVHHAIALGLHTTTLILVKGALDARGSKLMPDKKDFGYSFPCDGPGRGGTCDISAYDAFYLAVFWMLNTIGWVTFYWHWKHLTLWQGNVAQFDESSTYLMGWLRDYLWLNSSQLINGYNPFGMNSLSVWAWTFLFGHLIYATGFMFLISWRGYWQELIETLVWAHEKTPLANLVYWKDKPVALSIVQARLVGLAHFSVGYIFTYAAFLIASTSGRFG.

8 helical membrane-spanning segments follow: residues 47 to 70, 136 to 159, 176 to 200, 274 to 292, 331 to 354, 370 to 396, 418 to 440, and 518 to 536; these read IFASHFGQLSIIFLWTSGNLFHVA, LYVGSVFLALVSAIFLFAGWLHLQ, LNHHLSGLFGVSSLAWTGHLVHVAI, MAHHHLAIAVIFIVAGHMY, LHFQLGLALASVGTITSLVAQHMY, AALYTHHQYIAGFIMCGAFAHGAIFFI, ALISHLSWVSLFLGFHTLGLYVH, and FLVHHAIALGLHTTTLILV. [4Fe-4S] cluster-binding residues include Cys-560 and Cys-569. The next 2 membrane-spanning stretches (helical) occupy residues 576 to 597 and 644 to 666; these read AFYLAVFWMLNTIGWVTFYWHW and LSVWAWTFLFGHLIYATGFMFLI. The chlorophyll a site is built by His-655, Met-663, and Tyr-671. A phylloquinone-binding site is contributed by Trp-672. The helical transmembrane segment at 708–728 threads the bilayer; that stretch reads LVGLAHFSVGYIFTYAAFLIA.

This sequence belongs to the PsaA/PsaB family. The PsaA/B heterodimer binds the P700 chlorophyll special pair and subsequent electron acceptors. PSI consists of a core antenna complex that captures photons, and an electron transfer chain that converts photonic excitation into a charge separation. The eukaryotic PSI reaction center is composed of at least 11 subunits. It depends on P700 is a chlorophyll a/chlorophyll a' dimer, A0 is one or more chlorophyll a, A1 is one or both phylloquinones and FX is a shared 4Fe-4S iron-sulfur center. as a cofactor.

Its subcellular location is the plastid. It is found in the chloroplast thylakoid membrane. It carries out the reaction reduced [plastocyanin] + hnu + oxidized [2Fe-2S]-[ferredoxin] = oxidized [plastocyanin] + reduced [2Fe-2S]-[ferredoxin]. Functionally, psaA and PsaB bind P700, the primary electron donor of photosystem I (PSI), as well as the electron acceptors A0, A1 and FX. PSI is a plastocyanin/cytochrome c6-ferredoxin oxidoreductase, converting photonic excitation into a charge separation, which transfers an electron from the donor P700 chlorophyll pair to the spectroscopically characterized acceptors A0, A1, FX, FA and FB in turn. Oxidized P700 is reduced on the lumenal side of the thylakoid membrane by plastocyanin or cytochrome c6. Its function is as follows. Both potential cofactor branches in PSI seem to be active; however, electron transfer seems to proceed preferentially down the path including the phylloquinone bound by PsaA. In Chlamydomonas reinhardtii (Chlamydomonas smithii), this protein is Photosystem I P700 chlorophyll a apoprotein A2 (psaB).